We begin with the raw amino-acid sequence, 104 residues long: ATP-dependent Clp protease adapter protein ClpS (104 aa).

The protein belongs to the ClpS family. As to quaternary structure, binds to the N-terminal domain of the chaperone ClpA.

Functionally, involved in the modulation of the specificity of the ClpAP-mediated ATP-dependent protein degradation. The polypeptide is ATP-dependent Clp protease adapter protein ClpS (Paraburkholderia phymatum (strain DSM 17167 / CIP 108236 / LMG 21445 / STM815) (Burkholderia phymatum)).